The following is a 236-amino-acid chain: Glycosylphosphatidylinositol anchor biosynthesis protein 11 (236 aa).

Helical transmembrane passes span Thr-40–Thr-60 and Gly-65–Ile-85. An N-linked (GlcNAc...) asparagine glycan is attached at Asn-99. 4 consecutive transmembrane segments (helical) span residues Leu-107–Ile-127, Glu-139–Tyr-159, Ile-184–Leu-204, and Ile-215–Phe-235.

Belongs to the PIGF family.

It localises to the endoplasmic reticulum membrane. The protein operates within glycolipid biosynthesis; glycosylphosphatidylinositol-anchor biosynthesis. In terms of biological role, acts in the GPI biosynthetic pathway between GlcNAc-PI synthesis and GPI transfer to protein. The protein is Glycosylphosphatidylinositol anchor biosynthesis protein 11 (GPI11) of Debaryomyces hansenii (strain ATCC 36239 / CBS 767 / BCRC 21394 / JCM 1990 / NBRC 0083 / IGC 2968) (Yeast).